The following is a 492-amino-acid chain: Cytoplasmic dynein 1 light intermediate chain 2 (492 aa).

Residue 61–68 (GEDGSGKT) participates in ATP binding. Disordered stretches follow at residues 187–206 (PEEGCQGSPQRRGPLTSGSD), 371–423 (AKQP…KNNA), and 437–492 (LSKK…ENEA). Position 194 is a phosphoserine (S194). The segment covering 371 to 381 (AKQPATPTRAS) has biased composition (polar residues). 2 positions are modified to phosphoserine: S383 and S391. R397 is modified (omega-N-methylarginine). Residue T441 is modified to Phosphothreonine. 2 positions are modified to phosphoserine: S443 and S446. Polar residues predominate over residues 452-469 (VQSTAKKSGQKTVLSNVQ). The span at 471–480 (ELDRMTRKPD) shows a compositional bias: basic and acidic residues. Over residues 482–492 (MVTNSSTENEA) the composition is skewed to polar residues.

The protein belongs to the dynein light intermediate chain family. In terms of assembly, homodimer. The cytoplasmic dynein 1 complex consists of two catalytic heavy chains (HCs) and a number of non-catalytic subunits presented by intermediate chains (ICs), light intermediate chains (LICs) and light chains (LCs); the composition seems to vary in respect to the IC, LIC and LC composition. The heavy chain homodimer serves as a scaffold for the probable homodimeric assembly of the respective non-catalytic subunits. The ICs and LICs bind directly to the HC dimer and the LCs assemble on the IC dimer. Interacts with DYNC1H1; DYNC1LI1 and DYNC1LI2 bind mutually exclusive to DYNC1H.

The protein localises to the cytoplasm. The protein resides in the cytoskeleton. Functionally, acts as one of several non-catalytic accessory components of the cytoplasmic dynein 1 complex that are thought to be involved in linking dynein to cargos and to adapter proteins that regulate dynein function. Cytoplasmic dynein 1 acts as a motor for the intracellular retrograde motility of vesicles and organelles along microtubules. May play a role in binding dynein to membranous organelles or chromosomes. This is Cytoplasmic dynein 1 light intermediate chain 2 (DYNC1LI2) from Pongo abelii (Sumatran orangutan).